A 341-amino-acid chain; its full sequence is tRNA N6-adenosine threonylcarbamoyltransferase (341 aa).

Residues H111 and H115 each coordinate Fe cation. Substrate is bound by residues 134 to 138, D167, G180, and N276; that span reads LVSGG. D304 is a binding site for Fe cation.

This sequence belongs to the KAE1 / TsaD family. It depends on Fe(2+) as a cofactor.

The protein resides in the cytoplasm. The catalysed reaction is L-threonylcarbamoyladenylate + adenosine(37) in tRNA = N(6)-L-threonylcarbamoyladenosine(37) in tRNA + AMP + H(+). In terms of biological role, required for the formation of a threonylcarbamoyl group on adenosine at position 37 (t(6)A37) in tRNAs that read codons beginning with adenine. Is involved in the transfer of the threonylcarbamoyl moiety of threonylcarbamoyl-AMP (TC-AMP) to the N6 group of A37, together with TsaE and TsaB. TsaD likely plays a direct catalytic role in this reaction. The chain is tRNA N6-adenosine threonylcarbamoyltransferase from Pseudomonas syringae pv. syringae (strain B728a).